The chain runs to 492 residues: Cytochrome P450 2L1 (492 aa).

Position 436 (Cys436) interacts with heme.

The protein belongs to the cytochrome P450 family. It depends on heme as a cofactor.

It is found in the endoplasmic reticulum membrane. The protein resides in the microsome membrane. The enzyme catalyses an organic molecule + reduced [NADPH--hemoprotein reductase] + O2 = an alcohol + oxidized [NADPH--hemoprotein reductase] + H2O + H(+). Efficient in catalyzing the monooxygenation of benzphetamine, aminopyrine, benzo(a)pyrene, progesterone, and testosterone. The protein is Cytochrome P450 2L1 (CYP2L1) of Panulirus argus (Caribbean spiny lobster).